Consider the following 1110-residue polypeptide: RNA2 polyprotein (1110 aa).

The tract at residues 195–215 is disordered; sequence VHPGGPALPPPPPPPPIQKPP. A compositionally biased stretch (pro residues) spans 200-213; it reads PALPPPPPPPPIQK.

Belongs to the nepoviruses RNA2 polyprotein family. Post-translationally, specific enzymatic cleavages in vivo by the P1 encoded 3C-like protease yield mature proteins.

It is found in the host cell junction. It localises to the host plasmodesma. Its subcellular location is the virion. Implicated in RNA2 replication. Could also be required for nematode transmission of the virus. In terms of biological role, transports viral genome to neighboring plant cells directly through plasmosdesmata, without any budding. The movement protein allows efficient cell to cell propagation, by bypassing the host cell wall barrier. Acts by forming a tubular structure at the host plasmodesmata, enlarging it enough to allow free passage of virion capsids. The polypeptide is RNA2 polyprotein (Arabis mosaic virus (isolate NW) (ArMV)).